The primary structure comprises 187 residues: Core-binding factor subunit beta (187 aa).

A Phosphoserine; by CK2 modification is found at S10. Residues 139-187 (AQQAFEEARRRTREFEDRDRSHREEMEARRQQDPSPGSNLGGGDDLKLR) form a disordered region. Basic and acidic residues predominate over residues 144–170 (EEARRRTREFEDRDRSHREEMEARRQQ). S159 is subject to Phosphoserine; by PKC.

It belongs to the CBF-beta family. As to quaternary structure, heterodimer with RUNX1, RUNX2 and RUNX3. Interacts with COPRS. Found in a complex with PRMT5 and RUNX1. In terms of tissue distribution, expressed in all tissues tested. Highest level in thymus, but also abundantly expressed in muscle, lung and brain.

Its subcellular location is the nucleus. Its function is as follows. Forms the heterodimeric complex core-binding factor (CBF) with RUNX family proteins (RUNX1, RUNX2, and RUNX3). RUNX members modulate the transcription of their target genes through recognizing the core consensus binding sequence 5'-TGTGGT-3', or very rarely, 5'-TGCGGT-3', within their regulatory regions via their runt domain, while CBFB is a non-DNA-binding regulatory subunit that allosterically enhances the sequence-specific DNA-binding capacity of RUNX. The heterodimers bind to the core site of a number of enhancers and promoters, including murine leukemia virus, polyomavirus enhancer, T-cell receptor enhancers, LCK, IL3 and GM-CSF promoters. CBF complexes repress ZBTB7B transcription factor during cytotoxic (CD8+) T cell development. They bind to RUNX-binding sequence within the ZBTB7B locus acting as transcriptional silencer and allowing for cytotoxic T cell differentiation. This Mus musculus (Mouse) protein is Core-binding factor subunit beta (Cbfb).